Here is a 175-residue protein sequence, read N- to C-terminus: uncharacterized protein (175 aa).

The span at 35 to 56 shows a compositional bias: low complexity; that stretch reads LIENSNYDNNNINNNNNNNNTD. The tract at residues 35 to 70 is disordered; sequence LIENSNYDNNNINNNNNNNNTDNDNDNNNDNEPFYN. Transmembrane regions (helical) follow at residues 106–126 and 132–152; these read ILSF…FFNY and YFII…KSIF.

The protein localises to the membrane. This is an uncharacterized protein from Dictyostelium discoideum (Social amoeba).